The following is a 151-amino-acid chain: Putative pre-16S rRNA nuclease (151 aa).

This sequence belongs to the YqgF nuclease family.

It localises to the cytoplasm. In terms of biological role, could be a nuclease involved in processing of the 5'-end of pre-16S rRNA. The polypeptide is Putative pre-16S rRNA nuclease (Onion yellows phytoplasma (strain OY-M)).